Consider the following 252-residue polypeptide: Segregation and condensation protein A (252 aa).

Residues 117 to 136 are disordered; it reads EREEERQNAFTKPPSDLSEF.

It belongs to the ScpA family. Component of a cohesin-like complex composed of ScpA, ScpB and the Smc homodimer, in which ScpA and ScpB bind to the head domain of Smc. The presence of the three proteins is required for the association of the complex with DNA.

It localises to the cytoplasm. Participates in chromosomal partition during cell division. May act via the formation of a condensin-like complex containing Smc and ScpB that pull DNA away from mid-cell into both cell halves. This chain is Segregation and condensation protein A, found in Bacillus pumilus (strain SAFR-032).